Reading from the N-terminus, the 503-residue chain is Ell-associated factor Eaf (503 aa).

2 stretches are compositionally biased toward polar residues: residues 119–145 (TRNE…NQGA) and 167–186 (ENST…SRRN). Disordered regions lie at residues 119–220 (TRNE…PAWD), 250–360 (GHAN…SQSV), and 372–503 (GGVL…DDDD). Ser196 is subject to Phosphoserine. Low complexity predominate over residues 202–215 (SPSRPVPVHRSPQS). Polar residues-rich tracts occupy residues 250–273 (GHAN…STHI) and 298–307 (MAQQQQQHPS). Positions 308–337 (NYGRGYNGGHNHAQQQQQQQRNSPPRQRPS) are enriched in low complexity. The span at 385–400 (DSSDSDSGSDSDDSTE) shows a compositional bias: acidic residues. Composition is skewed to low complexity over residues 406-437 (QGQQ…HHNQ), 454-472 (HQQQ…QKQQ), and 487-497 (LQNDLQLSSNS).

The protein belongs to the EAF family.

The protein resides in the nucleus. Promotes transcriptional elongation by Su(Tpl)/ELL. Essential for development. This is Ell-associated factor Eaf from Drosophila sechellia (Fruit fly).